Here is a 193-residue protein sequence, read N- to C-terminus: MQELEERIQSEGTVKEGDVLKVDAFLNHQCDVRLFDRMGSAWAAHFAGKHITKILTIEASGIGIACVAAQHFGNVPVVFAKKAQSINLDGDQYTTTVYSFTKQKEFPVIVAKKYLNAGDHVLLIDDFLANGKALRGLINLCEAAGATVEGIGIAVEKGFQGGGDTLRAEGYDVDSLAIVESMNPETGEITFRH.

2 residues coordinate xanthine: Leu-20 and Asn-27. Residue 129–133 coordinates 5-phospho-alpha-D-ribose 1-diphosphate; that stretch reads ANGKA. Lys-157 is a xanthine binding site.

The protein belongs to the purine/pyrimidine phosphoribosyltransferase family. Xpt subfamily. As to quaternary structure, homodimer.

It is found in the cytoplasm. It catalyses the reaction XMP + diphosphate = xanthine + 5-phospho-alpha-D-ribose 1-diphosphate. Its pathway is purine metabolism; XMP biosynthesis via salvage pathway; XMP from xanthine: step 1/1. In terms of biological role, converts the preformed base xanthine, a product of nucleic acid breakdown, to xanthosine 5'-monophosphate (XMP), so it can be reused for RNA or DNA synthesis. The chain is Xanthine phosphoribosyltransferase from Bifidobacterium longum subsp. infantis (strain ATCC 15697 / DSM 20088 / JCM 1222 / NCTC 11817 / S12).